Consider the following 669-residue polypeptide: Thrombospondin-type laminin G domain and EAR repeat-containing protein (669 aa).

The signal sequence occupies residues 1-19 (MSALLSLCFVLPLAAPGHG). A Laminin G-like domain is found at 58–277 (GLQLSVAAPR…RVTLGPQPPC (220 aa)). 7 EAR repeats span residues 313–358 (DYVE…KWTE), 360–408 (KFVS…KWSH), 412–460 (KFTP…KWNP), 464–506 (LFEA…VHSH), 514–570 (SFQL…ELNV), 574–622 (AFVK…RWQG), and 625–668 (GFVA…RLRT). A glycan (N-linked (GlcNAc...) asparagine) is linked at asparagine 320. Residues asparagine 468, asparagine 497, asparagine 556, and asparagine 569 are each glycosylated (N-linked (GlcNAc...) asparagine).

The protein localises to the secreted. It is found in the cell surface. It localises to the cell projection. The protein resides in the stereocilium. Its function is as follows. Plays a critical role in tooth and hair follicle morphogenesis through regulation of the Notch signaling pathway. May play a role in development or function of the auditory system. In Homo sapiens (Human), this protein is Thrombospondin-type laminin G domain and EAR repeat-containing protein (TSPEAR).